The following is a 334-amino-acid chain: Holliday junction branch migration complex subunit RuvB (334 aa).

The segment at 4 to 184 is large ATPase domain (RuvB-L); sequence ADRIISPNAT…FGIVQRLEFY (181 aa). ATP contacts are provided by residues Ile23, Arg24, Gly65, Lys68, Thr69, Thr70, 131 to 133, Arg174, Tyr184, and Arg221; that span reads EDY. Thr69 contacts Mg(2+). The interval 185–255 is small ATPAse domain (RuvB-S); sequence SVEDLRHIVA…VADKALNMLN (71 aa). Residues 258-334 are head domain (RuvB-H); that stretch reads LHGFDHMDRR…YNHFGLTMPE (77 aa). DNA is bound by residues Arg313 and Arg318.

The protein belongs to the RuvB family. As to quaternary structure, homohexamer. Forms an RuvA(8)-RuvB(12)-Holliday junction (HJ) complex. HJ DNA is sandwiched between 2 RuvA tetramers; dsDNA enters through RuvA and exits via RuvB. An RuvB hexamer assembles on each DNA strand where it exits the tetramer. Each RuvB hexamer is contacted by two RuvA subunits (via domain III) on 2 adjacent RuvB subunits; this complex drives branch migration. In the full resolvosome a probable DNA-RuvA(4)-RuvB(12)-RuvC(2) complex forms which resolves the HJ.

It localises to the cytoplasm. The catalysed reaction is ATP + H2O = ADP + phosphate + H(+). The RuvA-RuvB-RuvC complex processes Holliday junction (HJ) DNA during genetic recombination and DNA repair, while the RuvA-RuvB complex plays an important role in the rescue of blocked DNA replication forks via replication fork reversal (RFR). RuvA specifically binds to HJ cruciform DNA, conferring on it an open structure. The RuvB hexamer acts as an ATP-dependent pump, pulling dsDNA into and through the RuvAB complex. RuvB forms 2 homohexamers on either side of HJ DNA bound by 1 or 2 RuvA tetramers; 4 subunits per hexamer contact DNA at a time. Coordinated motions by a converter formed by DNA-disengaged RuvB subunits stimulates ATP hydrolysis and nucleotide exchange. Immobilization of the converter enables RuvB to convert the ATP-contained energy into a lever motion, pulling 2 nucleotides of DNA out of the RuvA tetramer per ATP hydrolyzed, thus driving DNA branch migration. The RuvB motors rotate together with the DNA substrate, which together with the progressing nucleotide cycle form the mechanistic basis for DNA recombination by continuous HJ branch migration. Branch migration allows RuvC to scan DNA until it finds its consensus sequence, where it cleaves and resolves cruciform DNA. This is Holliday junction branch migration complex subunit RuvB from Hahella chejuensis (strain KCTC 2396).